A 135-amino-acid chain; its full sequence is Centromere protein S (135 aa).

The segment at serine 103–aspartate 135 is disordered.

It belongs to the TAF9 family. CENP-S/MHF1 subfamily. As to quaternary structure, heterodimer with CENPX, sometimes called MHF; this interaction stabilizes both partners. MHF heterodimers can assemble to form tetrameric structures. MHF also coassemble with CENPT-CENPW heterodimers at centromeres to form the tetrameric CENP-T-W-S-X complex. Forms a discrete complex with FANCM and CENPX, called FANCM-MHF; this interaction, probably mediated by direct binding between CENPS and FANCM, leads to synergistic activation of double-stranded DNA binding and strongly stimulates FANCM-mediated DNA remodeling. Recruited by FANCM to the Fanconi anemia (FA) core complex, which consists of CENPS, CENPX, FANCA, FANCB, FANCC, FANCE, FANCF, FANCG, FANCL, FANCM, FAAP24 and FAAP100. The FA core complex associates with Bloom syndrome (BLM) complex, which consists of at least BLM, DNA topoisomerase 3-alpha (TOP3A), RMI1/BLAP75, RPA1/RPA70 and RPA2/RPA32. The super complex between FA and BLM is called BRAFT. Component of the CENPA-CAD complex, composed of CENPI, CENPK, CENPL, CENPO, CENPP, CENPQ, CENPR and CENPS. The CENPA-CAD complex is probably recruited on centromeres by the CENPA-NAC complex, at least composed of CENPA, CENPC, CENPH, CENPM, CENPN, CENPT and CENPU.

The protein resides in the nucleus. It is found in the chromosome. Its subcellular location is the centromere. The protein localises to the kinetochore. DNA-binding component of the Fanconi anemia (FA) core complex. Required for the normal activation of the FA pathway, leading to monoubiquitination of the FANCI-FANCD2 complex in response to DNA damage, cellular resistance to DNA cross-linking drugs, and prevention of chromosomal breakage. In complex with CENPX (MHF heterodimer), crucial cofactor for FANCM in both binding and ATP-dependent remodeling of DNA. Stabilizes FANCM. In complex with CENPX and FANCM (but not other FANC proteins), rapidly recruited to blocked forks and promotes gene conversion at blocked replication forks. In complex with CENPT, CENPW and CENPX (CENP-T-W-S-X heterotetramer), involved in the formation of a functional kinetochore outer plate, which is essential for kinetochore-microtubule attachment and faithful mitotic progression. As a component of MHF and CENP-T-W-S-X complexes, binds DNA and bends it to form a nucleosome-like structure. DNA-binding function is fulfilled in the presence of CENPX, with the following preference for DNA substates: Holliday junction &gt; double-stranded &gt; splay arm &gt; single-stranded. Does not bind DNA on its own. The protein is Centromere protein S (cenps) of Xenopus laevis (African clawed frog).